Consider the following 199-residue polypeptide: Protein-L-isoaspartate O-methyltransferase (199 aa).

Residue Ser-51 is part of the active site.

Belongs to the methyltransferase superfamily. L-isoaspartyl/D-aspartyl protein methyltransferase family.

The protein localises to the cytoplasm. The catalysed reaction is [protein]-L-isoaspartate + S-adenosyl-L-methionine = [protein]-L-isoaspartate alpha-methyl ester + S-adenosyl-L-homocysteine. Functionally, catalyzes the methyl esterification of L-isoaspartyl residues in peptides and proteins that result from spontaneous decomposition of normal L-aspartyl and L-asparaginyl residues. It plays a role in the repair and/or degradation of damaged proteins. This is Protein-L-isoaspartate O-methyltransferase from Fervidobacterium nodosum (strain ATCC 35602 / DSM 5306 / Rt17-B1).